The sequence spans 109 residues: MKALSFLFIPVLGLLVCGQSLCPIDKAISEKIQEVTTSLVPGAVRIIGLDCRSVTSRGSLVTCPSGFAVTGCTCGSACGSWDVRAETTCHCQCAGMDWTGARCCRLHIQ.

The first 18 residues, 1–18, serve as a signal peptide directing secretion; that stretch reads MKALSFLFIPVLGLLVCG. 5 disulfides stabilise this stretch: Cys51-Cys104, Cys63-Cys103, Cys72-Cys89, Cys74-Cys91, and Cys78-Cys93.

Belongs to the resistin/FIZZ family. Homodimer; disulfide-linked.

It localises to the secreted. Functionally, hormone that seems to suppress insulin ability to stimulate glucose uptake into adipose cells. Potentially links obesity to diabetes. This Bos taurus (Bovine) protein is Resistin (RETN).